The sequence spans 859 residues: DNA mismatch repair protein MutS (859 aa).

617-624 (GPNMGGKS) contributes to the ATP binding site. Residues 799–821 (ETTSLPHEQPRAKPGKPAVPQQS) form a disordered region.

Belongs to the DNA mismatch repair MutS family.

Functionally, this protein is involved in the repair of mismatches in DNA. It is possible that it carries out the mismatch recognition step. This protein has a weak ATPase activity. This Pseudomonas syringae pv. syringae (strain B728a) protein is DNA mismatch repair protein MutS.